The sequence spans 632 residues: MAKLTKPKTEGILHKGQSLYEYLDARVLTSKPFGAAGDATTDDTEVIAASLNSQKAVTISDGVFSSSGINSNYCNLDGRGSGVLSHRSSTGNYLVFNNPRTGRLSNITVESNKATDTTQGQQVSLAGGSDVTVSDVNFSNVKGTGFSLIAYPNDAPPDGLMIKGIRGSYSGYATNKAAGCVLADSSVNSLIDNVIAKNYPQFGAVELKGTASYNIVSNVIGADCQHVTYNGTEGPIAPSNNLIKGVMANNPKYAAVVAGKGSTNLISDVLVDYSTSDARQAHGVTVEGSDNVINNVLMSGCDGTNSLGQRQTATIARFIGTANNNYASVFPSYSATGVITFESGSTRNFVEVKHPGRRNDLLSSASTIDGAATIDGTSNSNVVHAPALGQYIGSMSGRFEWRIKSMSLPSGVLTSADKYRMLGDGAVSLAVGGGTSSQVRLFTSDGTSRTVSLTNGNVRLSTSSTGYLQLGADAMTPDSTGTYALGSASRAWSGGFTQAAFTVTSDARCKTEPLTISDALLDAWSEVDFVQFQYLDRVEEKGADSARWHFGIIAQRAKEAFERHGIDAHRYGFLCFDSWDDVYEEDANGSRKLITPAGSRYGIRYEEVLILEAALMRRTIKRMQEALAALPK.

Residues Ser-505 to Leu-630 enclose the Peptidase S74 domain.

Homotrimer. Post-translationally, proteolytic cleavage and release of the chaperone in the host cytosol stabilizes the folded protein. The cleavage gives rise to the mature tail spike protein but is not essential for catalytic activity.

The protein resides in the virion. In terms of biological role, functions as a receptor binding protein (RBP) and probably mediates the attachment to the host capsular exopolysaccharides. Displays a depolymerase activity that specifically degrades the K5-type polysaccharides of Escherichia coli capsule. Its function is as follows. The C-terminal chaperone protein mediates homotrimerization and proper folding of the catalytic trimer. This Escherichia virus K5 (Bacteriophage K5) protein is Tail spike protein (kflA).